Consider the following 289-residue polypeptide: Shikimate dehydrogenase (NADP(+)) (289 aa).

Residues 22–24 (SRS) and Thr69 contribute to the shikimate site. Lys73 (proton acceptor) is an active-site residue. Residue Glu85 participates in NADP(+) binding. Shikimate contacts are provided by Asn94 and Asp109. NADP(+)-binding positions include 134 to 138 (GAGGA), 158 to 163 (NRTLSR), and Ile226. Tyr228 is a binding site for shikimate. Gly249 provides a ligand contact to NADP(+).

The protein belongs to the shikimate dehydrogenase family. Homodimer.

The catalysed reaction is shikimate + NADP(+) = 3-dehydroshikimate + NADPH + H(+). The protein operates within metabolic intermediate biosynthesis; chorismate biosynthesis; chorismate from D-erythrose 4-phosphate and phosphoenolpyruvate: step 4/7. Its function is as follows. Involved in the biosynthesis of the chorismate, which leads to the biosynthesis of aromatic amino acids. Catalyzes the reversible NADPH linked reduction of 3-dehydroshikimate (DHSA) to yield shikimate (SA). The chain is Shikimate dehydrogenase (NADP(+)) from Brucella ovis (strain ATCC 25840 / 63/290 / NCTC 10512).